The primary structure comprises 127 residues: Mini-ribonuclease 3-like protein (127 aa).

The active site involves Asp19.

It belongs to the MrnC RNase family.

Functionally, might be a ribonuclease involved in RNA processing. This Ilyobacter polytropus (strain ATCC 51220 / DSM 2926 / LMG 16218 / CuHBu1) protein is Mini-ribonuclease 3-like protein (mrnCL).